The primary structure comprises 420 residues: MSNTQKQLALAKAAKKSVNTADAEEKNRALLAMADSLEAAAEDILAANRLDLKAAAGKIPDSMTDRLLLDGKRICAMADGIRAVAALPDPVGEILETSTLPNGLEIVKKRVAMGVIGIIYESRPNVTSDAAALALKSGSAVVLRSGKDAFQSARAIVAALKTGLAQTRIDPEAVQLIEDTGREGSYEMMRAKDYLDLLIPRGGAGLIRAVVENAVVPVIETGTGIVHIYIDKDADWDKALRIVYNAKTGRPSVCNSMEVLLVHEGIAADFLPKLERLLVRGRIEAGLPPVRFRLDPQAARYIGGEAAGADDFDTEFLDYILAVKTVASVEEAVGHIEARGTHHSDGIVTENRHAADYFTTHIDSAAVYINASTRFTDGGEFGLGCEMGISTQKLHARGPMGLKELTSYKYIVQGTGQVRE.

The protein belongs to the gamma-glutamyl phosphate reductase family.

The protein resides in the cytoplasm. It carries out the reaction L-glutamate 5-semialdehyde + phosphate + NADP(+) = L-glutamyl 5-phosphate + NADPH + H(+). The protein operates within amino-acid biosynthesis; L-proline biosynthesis; L-glutamate 5-semialdehyde from L-glutamate: step 2/2. Functionally, catalyzes the NADPH-dependent reduction of L-glutamate 5-phosphate into L-glutamate 5-semialdehyde and phosphate. The product spontaneously undergoes cyclization to form 1-pyrroline-5-carboxylate. The sequence is that of Gamma-glutamyl phosphate reductase from Neisseria gonorrhoeae (strain ATCC 700825 / FA 1090).